The sequence spans 410 residues: Platelet-activating factor acetylhydrolase IB subunit alpha (410 aa).

Residues 1–38 are required for self-association and interaction with PAFAH1B2 and PAFAH1B3; sequence MVLSQRQRDELNRAIADYLRSNGYEEAYSVFKKEAELD. Positions 1 to 66 are interaction with NDE1; that stretch reads MVLSQRQRDE…SVIRLQKKVM (66 aa). The interval 1-102 is interaction with NDEL1; the sequence is MVLSQRQRDE…EWIPRPPEKY (102 aa). The region spanning 7 to 39 is the LisH domain; sequence QRDELNRAIADYLRSNGYEEAYSVFKKEAELDM. Lys-53 carries the post-translational modification N6-acetyllysine. Residues 56-82 adopt a coiled-coil conformation; it reads TSVIRLQKKVMELESKLNEAKEEFTSG. The segment at 83–410 is interaction with dynein and dynactin; that stretch reads GPLGQKRDPK…DQTVKVWECR (328 aa). 7 WD repeats span residues 106-147, 148-187, 190-229, 232-271, 274-333, 336-377, and 378-410; these read GHRS…RTLK, GHTD…CIRT, GHDH…CVKT, GHRE…CKAE, EHEH…CLMT, GHDN…KTLN, and AHEH…WECR. Ser-109 is modified (phosphoserine). Residues 367 to 409 are interaction with DCX; sequence YKNKRCMKTLNAHEHFVTSLDFHKTAPYVVTGSVDQTVKVWEC. The tract at residues 388–410 is interaction with NDEL1; the sequence is FHKTAPYVVTGSVDQTVKVWECR.

This sequence belongs to the WD repeat LIS1/nudF family. Can self-associate. Component of the cytosolic PAF-AH (I) heterotetrameric enzyme, which is composed of PAFAH1B1 (beta), PAFAH1B2 (alpha2) and PAFAH1B3 (alpha1) subunits. The catalytic activity of the enzyme resides in the alpha1 (PAFAH1B3) and alpha2 (PAFAH1B2) subunits, whereas the beta subunit (PAFAH1B1) has regulatory activity. Trimer formation is not essential for the catalytic activity. Interacts with the catalytic dimer of PAF-AH (I) heterotetrameric enzyme: interacts with PAFAH1B2 homodimer (alpha2/alpha2 homodimer), PAFAH1B3 homodimer (alpha1/alpha1 homodimer) and PAFAH1B2-PAFAH1B3 heterodimer (alpha2/alpha1 heterodimer). Interacts with DCX, dynein, dynactin, IQGAP1, KATNB1, NDE1, NDEL1, NUDC and RSN. Interacts with DISC1, and this interaction is enhanced by NDEL1. Interacts with DAB1 when DAB1 is phosphorylated in response to RELN/reelin signaling. Interacts with INTS13. Interacts with DCDC1.

The protein resides in the cytoplasm. Its subcellular location is the cytoskeleton. It localises to the microtubule organizing center. The protein localises to the centrosome. It is found in the spindle. The protein resides in the nucleus membrane. Its function is as follows. Regulatory subunit (beta subunit) of the cytosolic type I platelet-activating factor (PAF) acetylhydrolase (PAF-AH (I)), an enzyme that catalyzes the hydrolyze of the acetyl group at the sn-2 position of PAF and its analogs and participates in PAF inactivation. Regulates the PAF-AH (I) activity in a catalytic dimer composition-dependent manner. Positively regulates the activity of the minus-end directed microtubule motor protein dynein. May enhance dynein-mediated microtubule sliding by targeting dynein to the microtubule plus end. Required for several dynein- and microtubule-dependent processes such as the maintenance of Golgi integrity, the peripheral transport of microtubule fragments and the coupling of the nucleus and centrosome. Required during brain development for the proliferation of neuronal precursors and the migration of newly formed neurons from the ventricular/subventricular zone toward the cortical plate. Neuronal migration involves a process called nucleokinesis, whereby migrating cells extend an anterior process into which the nucleus subsequently translocates. During nucleokinesis dynein at the nuclear surface may translocate the nucleus towards the centrosome by exerting force on centrosomal microtubules. Also required for proper activation of Rho GTPases and actin polymerization at the leading edge of locomoting cerebellar neurons and postmigratory hippocampal neurons in response to calcium influx triggered via NMDA receptors. May also play a role in other forms of cell locomotion including the migration of fibroblasts during wound healing. Required for dynein recruitment to microtubule plus ends and BICD2-bound cargos. May modulate the Reelin pathway through interaction of the PAF-AH (I) catalytic dimer with VLDLR. The protein is Platelet-activating factor acetylhydrolase IB subunit alpha of Sus scrofa (Pig).